The sequence spans 272 residues: Cytochrome b-c1 complex subunit Rieske-1, mitochondrial (272 aa).

The transit peptide at 1-60 directs the protein to the mitochondrion; that stretch reads MLRVAGRRLFSVSQRSSTATSFVVSRDHTLSDGGGDSSSAPRSLPSADLSSYHRSLIRGF. Positions 27 to 46 are disordered; sequence DHTLSDGGGDSSSAPRSLPS. At 61 to 109 the chain is on the mitochondrial matrix side; that stretch reads SSQVLAQGNEIGFGSEVPATVEAVKTPNSKIVYDDHNHERYPPGDPSKR. A helical membrane pass occupies residues 110 to 132; that stretch reads AFAYFVLSGGRFVYASVLRLLVL. The Mitochondrial intermembrane portion of the chain corresponds to 133 to 272; the sequence is KLIVSMSASK…FLEENKLLIG (140 aa). The Rieske domain maps to 201-270; sequence VRVKNPEWLV…YSFLEENKLL (70 aa). [2Fe-2S] cluster is bound by residues Cys-215, His-217, Cys-234, and His-237. Cys-220 and Cys-236 form a disulfide bridge.

Belongs to the Rieske iron-sulfur protein family. As to quaternary structure, component of the ubiquinol-cytochrome c oxidoreductase (cytochrome b-c1 complex, complex III, CIII), a multisubunit enzyme composed of 10 subunits. The complex is composed of 3 respiratory subunits cytochrome b (MT-CYB), cytochrome c1 (CYC1-1 or CYC1-2) and Rieske protein (UCR1-1 or UCR1-2), 2 core protein subunits MPPalpha1 (or MPPalpha2) and MPPB, and 5 low-molecular weight protein subunits QCR7-1 (or QCR7-2), UCRQ-1 (or UCRQ-2), QCR9, UCRY and probably QCR6-1 (or QCR6-2). The complex exists as an obligatory dimer and forms supercomplexes (SCs) in the inner mitochondrial membrane with NADH-ubiquinone oxidoreductase (complex I, CI), resulting in different assemblies (supercomplexes SCI(1)III(2) and SCI(2)III(4)). It depends on [2Fe-2S] cluster as a cofactor.

Its subcellular location is the mitochondrion inner membrane. The catalysed reaction is a quinol + 2 Fe(III)-[cytochrome c](out) = a quinone + 2 Fe(II)-[cytochrome c](out) + 2 H(+)(out). Component of the ubiquinol-cytochrome c oxidoreductase, a multisubunit transmembrane complex that is part of the mitochondrial electron transport chain which drives oxidative phosphorylation. The respiratory chain contains 3 multisubunit complexes succinate dehydrogenase (complex II, CII), ubiquinol-cytochrome c oxidoreductase (cytochrome b-c1 complex, complex III, CIII) and cytochrome c oxidase (complex IV, CIV), that cooperate to transfer electrons derived from NADH and succinate to molecular oxygen, creating an electrochemical gradient over the inner membrane that drives transmembrane transport and the ATP synthase. The cytochrome b-c1 complex catalyzes electron transfer from ubiquinol to cytochrome c, linking this redox reaction to translocation of protons across the mitochondrial inner membrane, with protons being carried across the membrane as hydrogens on the quinol. In the process called Q cycle, 2 protons are consumed from the matrix, 4 protons are released into the intermembrane space and 2 electrons are passed to cytochrome c. The Rieske protein is a catalytic core subunit containing a [2Fe-2S] iron-sulfur cluster. It cycles between 2 conformational states during catalysis to transfer electrons from the quinol bound in the Q(0) site in cytochrome b to cytochrome c1. The protein is Cytochrome b-c1 complex subunit Rieske-1, mitochondrial of Arabidopsis thaliana (Mouse-ear cress).